A 359-amino-acid polypeptide reads, in one-letter code: Magnesium transporter NIPA2 (359 aa).

The Extracellular segment spans residues 1 to 9 (MSLGRGKYD). The chain crosses the membrane as a helical span at residues 10–30 (FYIGLGLAMTSSIFIGGSFIL). Residues 31–56 (KKKGLLRLARKGSMRAGQGGHAYLKE) lie on the Cytoplasmic side of the membrane. Residues 57–77 (WLWWAGLLSMGAGEVANFAAY) form a helical membrane-spanning segment. Position 78 (A78) is a topological domain, extracellular. A helical transmembrane segment spans residues 79–99 (FAPATLVTPLGALSVLVSAIL). The Cytoplasmic portion of the chain corresponds to 100 to 107 (SSYFLNER). Residues 108–128 (LNLHGKIGCLLSILGSTVMVI) form a helical membrane-spanning segment. Residues 129–149 (HAPKEEEIETLNEMSHKLGDP) are Extracellular-facing. The chain crosses the membrane as a helical span at residues 150 to 170 (GFVVFATFVVIVALIFIFVVG). Residues 171–175 (PRHGQ) lie on the Cytoplasmic side of the membrane. A helical transmembrane segment spans residues 176-196 (TNILVYITICSVIGAFSVSCV). The Extracellular segment spans residues 197 to 215 (KGLGIAIKELLAGKPVLQH). A helical membrane pass occupies residues 216-236 (PLAWILLFSLVVCVSTQINYL). Residues 237–246 (NRALDIFNTS) lie on the Cytoplasmic side of the membrane. A helical transmembrane segment spans residues 247–267 (IVTPIYYVFFTTSVLTCSAIL). The Extracellular portion of the chain corresponds to 268 to 278 (FKEWQDMPVDD). Residues 279–299 (VIGTLSGFFTIIVGIFLLHAF) form a helical membrane-spanning segment. Residues 300-359 (KDVSFSLASLPVSFRKDEKAMNGNLSSMYEVLNNNEDDLPCGIEHTGENISRRNGNLPSF) lie on the Cytoplasmic side of the membrane.

It belongs to the NIPA family. Widely expressed. Expressed at high levels in the kidney.

Its subcellular location is the cell membrane. It localises to the early endosome. The catalysed reaction is Mg(2+)(in) = Mg(2+)(out). In terms of biological role, acts as a selective Mg(2+) transporter. This Mus musculus (Mouse) protein is Magnesium transporter NIPA2 (Nipa2).